Consider the following 474-residue polypeptide: Glutamate--tRNA ligase 1 (474 aa).

The 'HIGH' region signature appears at 11–21 (PSPTGFLHIGG). Residues 113-133 (TARAEGRAPRYDGRWRDRDPS) show a composition bias toward basic and acidic residues. Residues 113 to 136 (TARAEGRAPRYDGRWRDRDPSEAP) are disordered. Residues 240–244 (KLSKR) carry the 'KMSKS' region motif. K243 contacts ATP.

Belongs to the class-I aminoacyl-tRNA synthetase family. Glutamate--tRNA ligase type 1 subfamily. In terms of assembly, monomer.

Its subcellular location is the cytoplasm. It catalyses the reaction tRNA(Glu) + L-glutamate + ATP = L-glutamyl-tRNA(Glu) + AMP + diphosphate. Its function is as follows. Catalyzes the attachment of glutamate to tRNA(Glu) in a two-step reaction: glutamate is first activated by ATP to form Glu-AMP and then transferred to the acceptor end of tRNA(Glu). This chain is Glutamate--tRNA ligase 1, found in Methylorubrum extorquens (strain PA1) (Methylobacterium extorquens).